The following is a 380-amino-acid chain: Cytochrome b (380 aa).

4 consecutive transmembrane segments (helical) span residues 33–53 (FGSL…FLAM), 77–98 (WFIR…YLHI), 113–133 (WTIG…GYVL), and 178–198 (FFTF…VHLL). Residues H83 and H97 each contribute to the heme b site. Residues H182 and H196 each contribute to the heme b site. H201 contacts a ubiquinone. 4 helical membrane passes run 226–246 (YKDL…ALFS), 288–308 (LGGV…PILH), 320–340 (LTQT…WIGG), and 347–367 (FVII…VLAP).

This sequence belongs to the cytochrome b family. As to quaternary structure, the cytochrome bc1 complex contains 3 respiratory subunits (MT-CYB, CYC1 and UQCRFS1), 2 core proteins (UQCRC1 and UQCRC2) and probably 6 low-molecular weight proteins. Heme b is required as a cofactor.

It localises to the mitochondrion inner membrane. Component of the ubiquinol-cytochrome c reductase complex (complex III or cytochrome b-c1 complex) that is part of the mitochondrial respiratory chain. The b-c1 complex mediates electron transfer from ubiquinol to cytochrome c. Contributes to the generation of a proton gradient across the mitochondrial membrane that is then used for ATP synthesis. The protein is Cytochrome b (mt-cyb) of Lampris guttatus (Opah).